The following is a 251-amino-acid chain: GTP cyclohydrolase 1 type 2 homolog (251 aa).

The a divalent metal cation site is built by His63, His64, Asp101, His219, and Glu223.

It belongs to the GTP cyclohydrolase I type 2/NIF3 family. Toroid-shaped homohexamer. In the hexamer, 3 dimers assemble to form a ring-like structure surrounding a central hole.

The protein is GTP cyclohydrolase 1 type 2 homolog of Haemophilus influenzae (strain ATCC 51907 / DSM 11121 / KW20 / Rd).